The sequence spans 404 residues: Proteasomal ubiquitin receptor ADRM1-A (404 aa).

Residues 17-130 (SSSKYLVEFR…RKLNEYLNNP (114 aa)) form the Pru domain. The span at 195-247 (GSGGPTTSSSSSSSRSQSAAVTPSSTTSSTRTTSAPVAPAAAPATTPSPAVSS) shows a compositional bias: low complexity. Disordered regions lie at residues 195–258 (GSGG…TSPT) and 376–404 (FAKA…MSLD). The span at 248–258 (NDGASEATSPT) shows a compositional bias: polar residues. In terms of domain architecture, DEUBAD spans 278–390 (TGEGGQQVDL…QSTSSQKERE (113 aa)). The span at 386–395 (QKERESSEKK) shows a compositional bias: basic and acidic residues.

Belongs to the ADRM1 family. In terms of assembly, component of the 19S proteasome regulatory particle complex. The 26S proteasome consists of a 20S core particle (CP) and two 19S regulatory subunits (RP).

The protein localises to the cytoplasm. The protein resides in the nucleus. Component of the 26S proteasome, a multiprotein complex involved in the ATP-dependent degradation of ubiquitinated proteins. This complex plays a key role in the maintenance of protein homeostasis by removing misfolded or damaged proteins, which could impair cellular functions, and by removing proteins whose functions are no longer required. Therefore, the proteasome participates in numerous cellular processes, including cell cycle progression, apoptosis, or DNA damage repair. Within the complex, functions as a proteasomal ubiquitin receptor. The sequence is that of Proteasomal ubiquitin receptor ADRM1-A (adrm1-a) from Xenopus laevis (African clawed frog).